Here is a 254-residue protein sequence, read N- to C-terminus: MNILISNDDGYHAQGIQTLAETLRDAGHSVTVIAPDRNRSAASSCLTLMEPIRVHQLDEFNYAVIAGTPADCVHLALNGFFEQSFDLVISGINHGANLGDDVVYSGTVAAALEGRHLPYPSLAISLVGRKSEGHLFGNNHFDTAAKVVLDLLPKVQKGIVPARQILNINVPDLPYEQVKGVMITRLGHRSPAAEIVKREDPRGATIYWLGANGVPVDASEGTDFYALAHNYVSVTPIQADMTAHYSIQALKDTF.

Positions 8, 9, 40, and 93 each coordinate a divalent metal cation.

This sequence belongs to the SurE nucleotidase family. A divalent metal cation serves as cofactor.

It is found in the cytoplasm. The catalysed reaction is a ribonucleoside 5'-phosphate + H2O = a ribonucleoside + phosphate. Functionally, nucleotidase that shows phosphatase activity on nucleoside 5'-monophosphates. The protein is 5'-nucleotidase SurE of Actinobacillus pleuropneumoniae serotype 5b (strain L20).